A 1548-amino-acid chain; its full sequence is Zinc finger MYM-type protein 4 (1548 aa).

Position 2 is an N-acetylalanine (Ala-2). Thr-107 is subject to Phosphothreonine. Residues Ser-110 and Ser-122 each carry the phosphoserine modification. Glycyl lysine isopeptide (Lys-Gly) (interchain with G-Cter in SUMO2) cross-links involve residues Lys-140 and Lys-149. Phosphoserine is present on Ser-162. The interval 162 to 189 (SKETFSGKEKNRDLTYEREKRLDKPHKD) is disordered. Lys-195 participates in a covalent cross-link: Glycyl lysine isopeptide (Lys-Gly) (interchain with G-Cter in SUMO2). Phosphoserine is present on Ser-197. Glycyl lysine isopeptide (Lys-Gly) (interchain with G-Cter in SUMO2) cross-links involve residues Lys-201 and Lys-232. Ser-242 carries the post-translational modification Phosphoserine. Lys-250 participates in a covalent cross-link: Glycyl lysine isopeptide (Lys-Gly) (interchain with G-Cter in SUMO1); alternate. A Glycyl lysine isopeptide (Lys-Gly) (interchain with G-Cter in SUMO2); alternate cross-link involves residue Lys-250. Glycyl lysine isopeptide (Lys-Gly) (interchain with G-Cter in SUMO2) cross-links involve residues Lys-260, Lys-271, Lys-273, Lys-289, Lys-327, Lys-400, Lys-428, and Lys-430. 9 consecutive MYM-type zinc fingers follow at residues 362-402 (QLFC…PKDV), 414-457 (KDFC…RHEV), 464-499 (HKLC…GSGQ), 510-544 (KKFC…AEMI), 554-592 (ELFC…QYHL), 600-631 (RNFC…LSQG), 708-742 (FQFC…KETV), 749-788 (KSFC…LVQN), and 795-829 (EEFC…SESL). Ser-1030 is subject to Phosphoserine. Glycyl lysine isopeptide (Lys-Gly) (interchain with G-Cter in SUMO2) cross-links involve residues Lys-1035 and Lys-1061. Residues Ser-1064 and Ser-1071 each carry the phosphoserine modification. Residues Lys-1080 and Lys-1127 each participate in a glycyl lysine isopeptide (Lys-Gly) (interchain with G-Cter in SUMO2) cross-link. Basic and acidic residues predominate over residues 1124-1134 (SELKQFSKGET). Disordered stretches follow at residues 1124 to 1183 (SELK…KSIV) and 1231 to 1260 (KCGG…QESS). A compositionally biased stretch (basic residues) spans 1160-1181 (SRTRRRHRDGFPQPRRRGRKKS). Residues Ser-1181 and Ser-1256 each carry the phosphoserine modification. Over residues 1237-1260 (QASSSPRSDPLGSTQDHALSQESS) the composition is skewed to polar residues. Lys-1431 is covalently cross-linked (Glycyl lysine isopeptide (Lys-Gly) (interchain with G-Cter in SUMO2)). Phosphoserine occurs at positions 1539, 1542, and 1547.

As to expression, expressed at higher level in heart, skeletal muscle, kidney and liver.

In terms of biological role, plays a role in the regulation of cell morphology and cytoskeletal organization. The chain is Zinc finger MYM-type protein 4 (ZMYM4) from Homo sapiens (Human).